The following is an 89-amino-acid chain: Small ribosomal subunit protein bS18 (89 aa).

This sequence belongs to the bacterial ribosomal protein bS18 family. In terms of assembly, part of the 30S ribosomal subunit. Forms a tight heterodimer with protein bS6.

In terms of biological role, binds as a heterodimer with protein bS6 to the central domain of the 16S rRNA, where it helps stabilize the platform of the 30S subunit. The sequence is that of Small ribosomal subunit protein bS18 from Phocaeicola vulgatus (strain ATCC 8482 / DSM 1447 / JCM 5826 / CCUG 4940 / NBRC 14291 / NCTC 11154) (Bacteroides vulgatus).